The sequence spans 363 residues: tRNA(Met) cytidine acetate ligase (363 aa).

Residues 7–20 (IAEF…HKYL), Gly96, Asn152, and Arg175 each bind ATP.

This sequence belongs to the TmcAL family.

It is found in the cytoplasm. It catalyses the reaction cytidine(34) in elongator tRNA(Met) + acetate + ATP = N(4)-acetylcytidine(34) in elongator tRNA(Met) + AMP + diphosphate. Functionally, catalyzes the formation of N(4)-acetylcytidine (ac(4)C) at the wobble position of elongator tRNA(Met), using acetate and ATP as substrates. First activates an acetate ion to form acetyladenylate (Ac-AMP) and then transfers the acetyl group to tRNA to form ac(4)C34. In Streptococcus thermophilus (strain ATCC BAA-250 / LMG 18311), this protein is tRNA(Met) cytidine acetate ligase.